A 172-amino-acid polypeptide reads, in one-letter code: RNA pyrophosphohydrolase (172 aa).

Residues G6–K149 enclose the Nudix hydrolase domain. Residues G38–G59 carry the Nudix box motif.

It belongs to the Nudix hydrolase family. RppH subfamily. It depends on a divalent metal cation as a cofactor.

In terms of biological role, accelerates the degradation of transcripts by removing pyrophosphate from the 5'-end of triphosphorylated RNA, leading to a more labile monophosphorylated state that can stimulate subsequent ribonuclease cleavage. In Shewanella denitrificans (strain OS217 / ATCC BAA-1090 / DSM 15013), this protein is RNA pyrophosphohydrolase.